The sequence spans 330 residues: Tyrosine-protein phosphatase yvh1 (330 aa).

The region spanning 45–187 (NDLSEISKNL…LRVYFECNYQ (143 aa)) is the Tyrosine-protein phosphatase domain. The Phosphocysteine intermediate role is filled by cysteine 131.

The protein belongs to the protein-tyrosine phosphatase family. Non-receptor class dual specificity subfamily.

The protein localises to the cytoplasm. Its subcellular location is the nucleus. The enzyme catalyses O-phospho-L-tyrosyl-[protein] + H2O = L-tyrosyl-[protein] + phosphate. Its function is as follows. May be directly involved in signal transduction and/or cell cycle regulation. It is necessary for maintaining growth rate or spore germination. Could show both activity toward tyrosine-protein phosphate as well as with serine-protein phosphate. This Schizosaccharomyces pombe (strain 972 / ATCC 24843) (Fission yeast) protein is Tyrosine-protein phosphatase yvh1 (yvh1).